A 323-amino-acid chain; its full sequence is MEKLVIATRASNLALWQAYHIKERIETAFPEVRVELNEITSKGDKILDKPLALVGGKGHFTKELEDEMIAGNAHLAVHSLKDVPTYIPEGLELCAITERQDQSDVFLSHTYKSLSELPEGAVVGTTSLRRRMQLLEKRPDLKVKDLRGNVNTRLRKLKEGQYDAIILAYIGLYRLDLLKDIPYVEKLDFFIPPMGQAALGIEIVANNDRIREIAMTLNHEPTFICTKVERDFISVIGAGCSAPVAVNATMDKKEDDKVPTISVRAMIGYPDGTHILHKSLTVPLNEADILGDELAQAMIEEGALDILEQAEIIAFKDEMPERL.

An S-(dipyrrolylmethanemethyl)cysteine modification is found at C240.

This sequence belongs to the HMBS family. As to quaternary structure, monomer. It depends on dipyrromethane as a cofactor.

It catalyses the reaction 4 porphobilinogen + H2O = hydroxymethylbilane + 4 NH4(+). It participates in porphyrin-containing compound metabolism; protoporphyrin-IX biosynthesis; coproporphyrinogen-III from 5-aminolevulinate: step 2/4. Tetrapolymerization of the monopyrrole PBG into the hydroxymethylbilane pre-uroporphyrinogen in several discrete steps. This chain is Porphobilinogen deaminase, found in Sulfurovum sp. (strain NBC37-1).